The chain runs to 244 residues: EEF1A lysine methyltransferase 2 (244 aa).

Positions 1-27 (MNADAEGHSGAVVPAQSPEGSSAADDF) are disordered. Ser21 bears the Phosphoserine mark.

The protein belongs to the class I-like SAM-binding methyltransferase superfamily. EFM4 family.

It localises to the cytoplasm. The protein resides in the nucleus. It carries out the reaction L-lysyl-[protein] + 3 S-adenosyl-L-methionine = N(6),N(6),N(6)-trimethyl-L-lysyl-[protein] + 3 S-adenosyl-L-homocysteine + 3 H(+). Functionally, protein-lysine methyltransferase that selectively catalyzes the trimethylation of EEF1A at 'Lys-318'. This chain is EEF1A lysine methyltransferase 2, found in Mus musculus (Mouse).